We begin with the raw amino-acid sequence, 600 residues long: NADPH-dependent diflavin oxidoreductase 1 (600 aa).

Positions 6–150 (LLILYGSQTG…VVDPWLKDLW (145 aa)) constitute a Flavodoxin-like domain. FMN-binding positions include 12 to 17 (SQTGTA), 59 to 62 (ATTG), 97 to 106 (LGDSSYPKFN), and Asp-132. In terms of domain architecture, FAD-binding FR-type spans 210 to 449 (IHPFLAPVLS…WVKKGSMKFP (240 aa)). FAD contacts are provided by residues Arg-354, 386–389 (RAFS), and 420–423 (GLCS). NADP(+)-binding positions include Thr-463, 518–519 (SR), and 524–528 (KIYVQ). Residue Trp-599 coordinates FAD.

The protein belongs to the NADPH-dependent diflavin oxidoreductase NDOR1 family. This sequence in the N-terminal section; belongs to the flavodoxin family. In the C-terminal section; belongs to the flavoprotein pyridine nucleotide cytochrome reductase family. Interacts with ciapin1; as part of the cytosolic iron-sulfur (Fe-S) protein assembly (CIA) machinery. FAD serves as cofactor. The cofactor is FMN.

The protein resides in the cytoplasm. Its subcellular location is the perinuclear region. It carries out the reaction 2 oxidized [2Fe-2S]-[protein] + NADPH = 2 reduced [2Fe-2S]-[protein] + NADP(+) + H(+). In terms of biological role, NADPH-dependent reductase which is a central component of the cytosolic iron-sulfur (Fe-S) protein assembly (CIA) machinery. Transfers electrons from NADPH via its FAD and FMN prosthetic groups to the [2Fe-2S] cluster of ciapin1, another key component of the CIA machinery. In turn, this reduced cluster provides electrons for assembly of cytosolic iron-sulfur cluster proteins. It can also reduce the [2Fe-2S] cluster of cisd1 and activate this protein implicated in Fe/S cluster repair. The polypeptide is NADPH-dependent diflavin oxidoreductase 1 (Xenopus laevis (African clawed frog)).